The primary structure comprises 65 residues: uncharacterized protein (65 aa).

This sequence to E.coli YjiX.

This is an uncharacterized protein from Escherichia coli O6:H1 (strain CFT073 / ATCC 700928 / UPEC).